We begin with the raw amino-acid sequence, 338 residues long: MTKMYYEKDTDLNLLKGKTIAVIGYGSQGHAHALNAKESGCNVIIGLYEGSKSWGKAEAQGFEVFSTAEAAKKADIIMILINDELQAAMYKKDIEPNLESGNMLMFAHGFNIHFDQITAPKDVDVTMIAPKGPGHTVRSEYQLGKGVPCLVAVHQDATGRALETALAYANAIGGARAGVLETTFRTETETDLFGEQAVLCGGVCALMQAGFETLVEAGYDERNAYFECIHEMKLIVDLIYQSGFAGMRYSVSNTAEYGDYITGSKIITEETKKTMKKILKDIQDGTFAKDFLLDMSEAGGQAHFKAMRKLAAEHKSEAVGSEIRKLYCWNNEDKLINN.

Residues 2–182 (TKMYYEKDTD…GGARAGVLET (181 aa)) enclose the KARI N-terminal Rossmann domain. NADP(+) contacts are provided by residues 25-28 (YGSQ), Ser-51, Ser-53, and 83-86 (DELQ). Residue His-108 is part of the active site. Gly-134 contributes to the NADP(+) binding site. A KARI C-terminal knotted domain is found at 183-330 (TFRTETETDL…SEIRKLYCWN (148 aa)). Mg(2+) contacts are provided by Asp-191, Glu-195, Glu-227, and Glu-231. Ser-252 contributes to the substrate binding site.

It belongs to the ketol-acid reductoisomerase family. Mg(2+) is required as a cofactor.

The catalysed reaction is (2R)-2,3-dihydroxy-3-methylbutanoate + NADP(+) = (2S)-2-acetolactate + NADPH + H(+). It carries out the reaction (2R,3R)-2,3-dihydroxy-3-methylpentanoate + NADP(+) = (S)-2-ethyl-2-hydroxy-3-oxobutanoate + NADPH + H(+). The protein operates within amino-acid biosynthesis; L-isoleucine biosynthesis; L-isoleucine from 2-oxobutanoate: step 2/4. Its pathway is amino-acid biosynthesis; L-valine biosynthesis; L-valine from pyruvate: step 2/4. Its function is as follows. Involved in the biosynthesis of branched-chain amino acids (BCAA). Catalyzes an alkyl-migration followed by a ketol-acid reduction of (S)-2-acetolactate (S2AL) to yield (R)-2,3-dihydroxy-isovalerate. In the isomerase reaction, S2AL is rearranged via a Mg-dependent methyl migration to produce 3-hydroxy-3-methyl-2-ketobutyrate (HMKB). In the reductase reaction, this 2-ketoacid undergoes a metal-dependent reduction by NADPH to yield (R)-2,3-dihydroxy-isovalerate. This chain is Ketol-acid reductoisomerase (NADP(+)), found in Clostridium botulinum (strain Alaska E43 / Type E3).